A 240-amino-acid chain; its full sequence is Proteasome subunit alpha (240 aa).

It belongs to the peptidase T1A family. As to quaternary structure, the 20S proteasome core is composed of 14 alpha and 14 beta subunits that assemble into four stacked heptameric rings, resulting in a barrel-shaped structure. The two inner rings, each composed of seven catalytic beta subunits, are sandwiched by two outer rings, each composed of seven alpha subunits. The catalytic chamber with the active sites is on the inside of the barrel. Has a gated structure, the ends of the cylinder being occluded by the N-termini of the alpha-subunits. Is capped at one or both ends by the proteasome regulatory ATPase, PAN.

Its subcellular location is the cytoplasm. With respect to regulation, the formation of the proteasomal ATPase PAN-20S proteasome complex, via the docking of the C-termini of PAN into the intersubunit pockets in the alpha-rings, triggers opening of the gate for substrate entry. Interconversion between the open-gate and close-gate conformations leads to a dynamic regulation of the 20S proteasome proteolysis activity. In terms of biological role, component of the proteasome core, a large protease complex with broad specificity involved in protein degradation. The sequence is that of Proteasome subunit alpha from Methanoculleus marisnigri (strain ATCC 35101 / DSM 1498 / JR1).